A 541-amino-acid chain; its full sequence is Neutral amino acid transporter B(0) (541 aa).

Met1 is subject to N-acetylmethionine. Residues 1 to 10 are compositionally biased toward basic and acidic residues; that stretch reads MVADPPKGDP. Positions 1-32 are disordered; that stretch reads MVADPPKGDPKGLAAVEPTANGAPAQDPLEDS. Residues 1–52 lie on the Cytoplasmic side of the membrane; it reads MVADPPKGDPKGLAAVEPTANGAPAQDPLEDSGAAVGRCCSSRDQVRRCLRA. A helical transmembrane segment spans residues 53 to 82; the sequence is NLLVLLTVVAVVAGVALGLAVSGAGGALAL. Over 83–95 the chain is Extracellular; that stretch reads GPARLIAFAFPGE. The chain crosses the membrane as a helical span at residues 96–117; that stretch reads LLLRLLKMIILPLVVCSLVGGA. The Cytoplasmic segment spans residues 118–131; sequence ASLDPSALGRLGAW. A helical membrane pass occupies residues 132–154; the sequence is ALLFFLVTTLLASALGVGLALAL. Residues 155–225 are Extracellular-facing; that stretch reads QPGAAFAAMN…GTLVKVPVAH (71 aa). Asn164 and Asn215 each carry an N-linked (GlcNAc...) asparagine glycan. The helical transmembrane segment at 226–249 threads the bilayer; the sequence is EEEGMNILGLVVFAIVFGVALRKL. Over 250–258 the chain is Cytoplasmic; that stretch reads GPEGEPLIR. The helical transmembrane segment at 259–286 threads the bilayer; that stretch reads FFNSFNDATMVLVSWIMWYAPVGILFLV. Topologically, residues 287 to 307 are extracellular; it reads ASKIVEMDDVGVLFASLGKYI. The chain crosses the membrane as a helical span at residues 308–329; that stretch reads LCCLLGHAIHGLLVLPLIYFLF. Over 330-334 the chain is Cytoplasmic; that stretch reads TRKNP. Positions 335–365 form an intramembrane region, discontinuously helical; that stretch reads YRFLWGILTPLAMAFGTSSSSATLPLMMKCV. Topologically, residues 366–374 are cytoplasmic; that stretch reads EERNGVAKH. A helical membrane pass occupies residues 375-401; the sequence is ISRFVLPIGATVNMDGAALFQCVAAVF. Na(+)-binding residues include Gly383, Thr385, and Asn387. Residues 402-414 lie on the Extracellular side of the membrane; the sequence is IAQLNRQSLDFVK. The segment at residues 415-448 is an intramembrane region (discontinuously helical); sequence IITILVTATASSVGAAGIPAGGVLTLAIILEAVS. Topologically, residues 449 to 461 are extracellular; that stretch reads LPVSEISLILAVD. A helical transmembrane segment spans residues 462–483; sequence WLVDRSCTIINVEGDAFGAGLL. The Na(+) site is built by Asn472 and Asp476. Residues 484-541 are Cytoplasmic-facing; the sequence is QHYVDRTEQRGSEPELTQVKSEVPLGSLPAPNEEGNPLLRHSPGAAGDAGACEKESVM. A disordered region spans residues 493–541; sequence RGSEPELTQVKSEVPLGSLPAPNEEGNPLLRHSPGAAGDAGACEKESVM. Phosphoserine is present on residues Ser495, Ser504, and Ser539.

This sequence belongs to the dicarboxylate/amino acid:cation symporter (DAACS) (TC 2.A.23) family. SLC1A5 subfamily. As to quaternary structure, homotrimer.

It is found in the cell membrane. The protein resides in the melanosome. The catalysed reaction is L-glutamine(out) + L-serine(in) + Na(+)(out) = L-glutamine(in) + L-serine(out) + Na(+)(in). The enzyme catalyses L-glutamine(in) + L-serine(out) + Na(+)(out) = L-glutamine(out) + L-serine(in) + Na(+)(in). It catalyses the reaction L-threonine(in) + L-glutamine(out) + Na(+)(out) = L-threonine(out) + L-glutamine(in) + Na(+)(in). It carries out the reaction L-threonine(out) + L-glutamine(in) + Na(+)(out) = L-threonine(in) + L-glutamine(out) + Na(+)(in). The catalysed reaction is L-asparagine(in) + L-glutamine(out) + Na(+)(out) = L-asparagine(out) + L-glutamine(in) + Na(+)(in). The enzyme catalyses L-asparagine(out) + L-glutamine(in) + Na(+)(out) = L-asparagine(in) + L-glutamine(out) + Na(+)(in). It catalyses the reaction L-glutamine(in) + L-alanine(out) + Na(+)(out) = L-glutamine(out) + L-alanine(in) + Na(+)(in). It carries out the reaction L-valine(out) + L-glutamine(in) + Na(+)(out) = L-valine(in) + L-glutamine(out) + Na(+)(in). The catalysed reaction is L-glutamine(in) + L-methionine(out) + Na(+)(out) = L-glutamine(out) + L-methionine(in) + Na(+)(in). The enzyme catalyses L-glutamine(in) + L-glutamate(out) + Na(+)(out) + H(+)(out) = L-glutamine(out) + L-glutamate(in) + Na(+)(in) + H(+)(in). It catalyses the reaction D-serine(in) + L-glutamine(out) + Na(+)(out) = D-serine(out) + L-glutamine(in) + Na(+)(in). It carries out the reaction D-serine(in) + L-alanine(out) + Na(+)(out) = D-serine(out) + L-alanine(in) + Na(+)(in). The catalysed reaction is nitrate(in) = nitrate(out). The enzyme catalyses iodide(out) = iodide(in). It catalyses the reaction thiocyanate(in) = thiocyanate(out). Its function is as follows. Sodium-coupled antiporter of neutral amino acids. In a tri-substrate transport cycle, exchanges neutral amino acids between the extracellular and intracellular compartments, coupled to the inward cotransport of at least one sodium ion. The preferred substrate is the essential amino acid L-glutamine, a precursor for biosynthesis of proteins, nucleotides and amine sugars as well as an alternative fuel for mitochondrial oxidative phosphorylation. Exchanges L-glutamine with other neutral amino acids such as L-serine, L-threonine and L-asparagine in a bidirectional way. Provides L-glutamine to proliferating stem and activated cells driving the metabolic switch toward cell differentiation. The transport cycle is usually pH-independent, with the exception of L-glutamate. Transports extracellular L-glutamate coupled to the cotransport of one proton and one sodium ion in exchange for intracellular L-glutamine counter-ion. May provide for L-glutamate uptake in glial cells regulating glutamine/glutamate cycle in the nervous system. Can transport D-amino acids. Mediates D-serine release from the retinal glia potentially affecting NMDA receptor function in retinal neurons. Displays sodium- and amino acid-dependent but uncoupled channel-like anion conductance with a preference SCN(-) &gt;&gt; NO3(-) &gt; I(-) &gt; Cl(-). Through binding of the fusogenic protein syncytin-1/ERVW-1 may mediate trophoblasts syncytialization, the spontaneous fusion of their plasma membranes, an essential process in placental development. The protein is Neutral amino acid transporter B(0) (SLC1A5) of Oryctolagus cuniculus (Rabbit).